We begin with the raw amino-acid sequence, 242 residues long: MAGHSKWANIKHKKAAADAKRGKIWTRLIKEIQVAARLGGGDVNSNPRLRLAVDKAADANMPKDNVKRAIDRGVGGADGANYEEIRYEGYGISGAAIIVDTLTDNRTRTVAEVRHAFSKFGGNMGTDGSVAFMFDHVGQFLFAPGTSEDALMEAALEAGANDVNTNDDGSIEVLCDWQAFSAVKDALEAAGFKAELAEVTMKPQNEVEFTGDDAAKMQKLLDALENLDDVQDVYTNAVIVEE.

This sequence belongs to the TACO1 family.

The protein localises to the cytoplasm. This is Probable transcriptional regulatory protein Bcen2424_2294 from Burkholderia cenocepacia (strain HI2424).